The sequence spans 105 residues: MQMIRAIIRPGMETKVIECLEKEGCISLTKMEVFGRGKQKGIHIADISYDELQKTMLLMVVEDEHKDRAIKTIMESARTGKYGDGRIFVTPVEEAYTIRTGKPGL.

The protein belongs to the P(II) protein family.

Could be involved in the regulation of nitrogen fixation. The chain is Nitrogen fixation nifHD1 region GlnB-like protein 1 (glnBA) from Methanosarcina barkeri.